The chain runs to 1488 residues: Chromosome partition protein MukB (1488 aa).

Residue 34-41 coordinates ATP; it reads GGNGAGKS. Coiled coils occupy residues 326–418, 444–472, and 509–602; these read LEAD…QYNQ, LDTF…QTAH, and RHLA…QRAP. The tract at residues 666 to 783 is flexible hinge; sequence PGGAEDQRLN…SLPIFGRAAR (118 aa). 3 coiled-coil regions span residues 835–923, 977–1116, and 1209–1265; these read EAEI…AKLE, EMLS…AKAG, and VEAI…LQSV. The segment at 1049–1074 is disordered; that stretch reads ADSGAEERARQRRDELHAQLSNNRSR. Positions 1051–1065 are enriched in basic and acidic residues; the sequence is SGAEERARQRRDELH.

The protein belongs to the SMC family. MukB subfamily. Homodimerization via its hinge domain. Binds to DNA via its C-terminal region. Interacts, and probably forms a ternary complex, with MukE and MukF via its C-terminal region. The complex formation is stimulated by calcium or magnesium. Interacts with tubulin-related protein FtsZ.

The protein resides in the cytoplasm. It localises to the nucleoid. Functionally, plays a central role in chromosome condensation, segregation and cell cycle progression. Functions as a homodimer, which is essential for chromosome partition. Involved in negative DNA supercoiling in vivo, and by this means organize and compact chromosomes. May achieve or facilitate chromosome segregation by condensation DNA from both sides of a centrally located replisome during cell division. The sequence is that of Chromosome partition protein MukB from Salmonella gallinarum (strain 287/91 / NCTC 13346).